A 384-amino-acid polypeptide reads, in one-letter code: Succinyl-diaminopimelate desuccinylase (384 aa).

Zn(2+) is bound at residue histidine 71. The active site involves aspartate 73. A Zn(2+)-binding site is contributed by aspartate 104. Glutamate 139 acts as the Proton acceptor in catalysis. Zn(2+) contacts are provided by glutamate 140, glutamate 168, and histidine 357.

It belongs to the peptidase M20A family. DapE subfamily. Homodimer. Zn(2+) is required as a cofactor. Requires Co(2+) as cofactor.

It catalyses the reaction N-succinyl-(2S,6S)-2,6-diaminopimelate + H2O = (2S,6S)-2,6-diaminopimelate + succinate. It participates in amino-acid biosynthesis; L-lysine biosynthesis via DAP pathway; LL-2,6-diaminopimelate from (S)-tetrahydrodipicolinate (succinylase route): step 3/3. Catalyzes the hydrolysis of N-succinyl-L,L-diaminopimelic acid (SDAP), forming succinate and LL-2,6-diaminopimelate (DAP), an intermediate involved in the bacterial biosynthesis of lysine and meso-diaminopimelic acid, an essential component of bacterial cell walls. The chain is Succinyl-diaminopimelate desuccinylase from Afipia carboxidovorans (strain ATCC 49405 / DSM 1227 / KCTC 32145 / OM5) (Oligotropha carboxidovorans).